The chain runs to 148 residues: Large ribosomal subunit protein uL15 (148 aa).

A disordered region spans residues 1–51 (MNLSNLKPAEGSTKTRKRIGRGAGSGLGGTSTRGHKGAKSRSGYSKKVGFE). Over residues 21 to 31 (RGAGSGLGGTS) the composition is skewed to gly residues.

It belongs to the universal ribosomal protein uL15 family. As to quaternary structure, part of the 50S ribosomal subunit.

Binds to the 23S rRNA. The sequence is that of Large ribosomal subunit protein uL15 from Bacteroides thetaiotaomicron (strain ATCC 29148 / DSM 2079 / JCM 5827 / CCUG 10774 / NCTC 10582 / VPI-5482 / E50).